Reading from the N-terminus, the 682-residue chain is Penicillin-binding protein activator LpoA (682 aa).

Residues 1–26 form the signal peptide; sequence MLSSITVRTKSGRLIPLVLAATLLAA. C27 carries the N-palmitoyl cysteine lipid modification. C27 carries S-diacylglycerol cysteine lipidation.

Belongs to the LpoA family. In terms of assembly, interacts with PBP1a.

The protein resides in the cell outer membrane. Functionally, regulator of peptidoglycan synthesis that is essential for the function of penicillin-binding protein 1A (PBP1a). The chain is Penicillin-binding protein activator LpoA from Edwardsiella ictaluri (strain 93-146).